The sequence spans 95 residues: Aspartyl/glutamyl-tRNA(Asn/Gln) amidotransferase subunit C (95 aa).

This sequence belongs to the GatC family. Heterotrimer of A, B and C subunits.

It carries out the reaction L-glutamyl-tRNA(Gln) + L-glutamine + ATP + H2O = L-glutaminyl-tRNA(Gln) + L-glutamate + ADP + phosphate + H(+). The catalysed reaction is L-aspartyl-tRNA(Asn) + L-glutamine + ATP + H2O = L-asparaginyl-tRNA(Asn) + L-glutamate + ADP + phosphate + 2 H(+). Its function is as follows. Allows the formation of correctly charged Asn-tRNA(Asn) or Gln-tRNA(Gln) through the transamidation of misacylated Asp-tRNA(Asn) or Glu-tRNA(Gln) in organisms which lack either or both of asparaginyl-tRNA or glutaminyl-tRNA synthetases. The reaction takes place in the presence of glutamine and ATP through an activated phospho-Asp-tRNA(Asn) or phospho-Glu-tRNA(Gln). The sequence is that of Aspartyl/glutamyl-tRNA(Asn/Gln) amidotransferase subunit C from Cereibacter sphaeroides (strain ATCC 17023 / DSM 158 / JCM 6121 / CCUG 31486 / LMG 2827 / NBRC 12203 / NCIMB 8253 / ATH 2.4.1.) (Rhodobacter sphaeroides).